The sequence spans 357 residues: DNA integrity scanning protein DisA (357 aa).

The region spanning R3–S141 is the DAC domain. ATP contacts are provided by residues G70, L88, and T101–S105.

It belongs to the DisA family. Homooctamer. It depends on Mg(2+) as a cofactor.

It catalyses the reaction 2 ATP = 3',3'-c-di-AMP + 2 diphosphate. Participates in a DNA-damage check-point. DisA forms globular foci that rapidly scan along the chromosomes searching for lesions. Its function is as follows. Also has diadenylate cyclase activity, catalyzing the condensation of 2 ATP molecules into cyclic di-AMP (c-di-AMP). c-di-AMP likely acts as a signaling molecule that may couple DNA integrity with a cellular process. This is DNA integrity scanning protein DisA from Mycolicibacterium paratuberculosis (strain ATCC BAA-968 / K-10) (Mycobacterium paratuberculosis).